Consider the following 300-residue polypeptide: Small ribosomal subunit biogenesis GTPase RsgA (300 aa).

The 163-residue stretch at 69-231 folds into the CP-type G domain; the sequence is RSDEMRVKQF…LIDSPGFQAF (163 aa). GTP is bound by residues 119 to 122 and 172 to 180; these read NKID and GQSGMGKST. Cys255, Cys260, His262, and Cys268 together coordinate Zn(2+).

It belongs to the TRAFAC class YlqF/YawG GTPase family. RsgA subfamily. As to quaternary structure, monomer. Associates with 30S ribosomal subunit, binds 16S rRNA. Zn(2+) serves as cofactor.

The protein localises to the cytoplasm. Its function is as follows. One of several proteins that assist in the late maturation steps of the functional core of the 30S ribosomal subunit. Helps release RbfA from mature subunits. May play a role in the assembly of ribosomal proteins into the subunit. Circularly permuted GTPase that catalyzes slow GTP hydrolysis, GTPase activity is stimulated by the 30S ribosomal subunit. In Bordetella bronchiseptica (strain ATCC BAA-588 / NCTC 13252 / RB50) (Alcaligenes bronchisepticus), this protein is Small ribosomal subunit biogenesis GTPase RsgA.